Reading from the N-terminus, the 199-residue chain is MNYKDIINACILSGVFLLHSPSALADTPSVGVSKGQESLQPAAEGNLWQRLIRNVSLAWNSPHQELYIPVNTWHNRWTYDDEKIASYNERPWGVGYGKYRYDEDNNWHSVYAMAFMDSHNRVEPILGYGYQKMWIPGEREGWRFGAGFTASITARYEYHYIPLPLPLPLISIEYNRLSLQTTYIPGTYNNGNVLFTWIR.

The N-terminal stretch at 1–25 is a signal peptide; it reads MNYKDIINACILSGVFLLHSPSALA. Catalysis depends on residues H74, D117, and S118.

It belongs to the lipid A palmitoyltransferase family. As to quaternary structure, homodimer.

The protein localises to the cell outer membrane. The catalysed reaction is a lipid A + a 1,2-diacyl-sn-glycero-3-phosphocholine = a hepta-acyl lipid A + a 2-acyl-sn-glycero-3-phosphocholine. The enzyme catalyses a lipid IVA + a 1,2-diacyl-sn-glycero-3-phosphocholine = a lipid IVB + a 2-acyl-sn-glycero-3-phosphocholine. It carries out the reaction a lipid IIA + a 1,2-diacyl-sn-glycero-3-phosphocholine = a lipid IIB + a 2-acyl-sn-glycero-3-phosphocholine. In terms of biological role, transfers a fatty acid residue from the sn-1 position of a phospholipid to the N-linked hydroxyfatty acid chain on the proximal unit of lipid A or its precursors. The protein is Lipid A acyltransferase PagP of Yersinia pestis bv. Antiqua (strain Antiqua).